The chain runs to 164 residues: NADH-quinone oxidoreductase subunit I (164 aa).

4Fe-4S ferredoxin-type domains are found at residues 56–85 (RRYE…IEAE) and 95–124 (TRYD…EGPN). The [4Fe-4S] cluster site is built by Cys65, Cys68, Cys71, Cys75, Cys104, Cys107, Cys110, and Cys114.

This sequence belongs to the complex I 23 kDa subunit family. As to quaternary structure, NDH-1 is composed of 14 different subunits. Subunits NuoA, H, J, K, L, M, N constitute the membrane sector of the complex. It depends on [4Fe-4S] cluster as a cofactor.

It is found in the cell inner membrane. The enzyme catalyses a quinone + NADH + 5 H(+)(in) = a quinol + NAD(+) + 4 H(+)(out). Functionally, NDH-1 shuttles electrons from NADH, via FMN and iron-sulfur (Fe-S) centers, to quinones in the respiratory chain. The immediate electron acceptor for the enzyme in this species is believed to be ubiquinone. Couples the redox reaction to proton translocation (for every two electrons transferred, four hydrogen ions are translocated across the cytoplasmic membrane), and thus conserves the redox energy in a proton gradient. In Anaplasma phagocytophilum (strain HZ), this protein is NADH-quinone oxidoreductase subunit I.